Consider the following 1407-residue polypeptide: DNA-directed RNA polymerase subunit beta' (1407 aa).

The Zn(2+) site is built by C70, C72, C85, and C88. The Mg(2+) site is built by D460, D462, and D464. Residues C814, C888, C895, and C898 each contribute to the Zn(2+) site. K972 is subject to N6-acetyllysine.

This sequence belongs to the RNA polymerase beta' chain family. The RNAP catalytic core consists of 2 alpha, 1 beta, 1 beta' and 1 omega subunit. When a sigma factor is associated with the core the holoenzyme is formed, which can initiate transcription. Mg(2+) serves as cofactor. It depends on Zn(2+) as a cofactor.

It carries out the reaction RNA(n) + a ribonucleoside 5'-triphosphate = RNA(n+1) + diphosphate. DNA-dependent RNA polymerase catalyzes the transcription of DNA into RNA using the four ribonucleoside triphosphates as substrates. This chain is DNA-directed RNA polymerase subunit beta', found in Shigella dysenteriae serotype 1 (strain Sd197).